The primary structure comprises 153 residues: ATP synthase subunit b' (153 aa).

The chain crosses the membrane as a helical span at residues Thr-20 to Phe-40.

Belongs to the ATPase B chain family. F-type ATPases have 2 components, F(1) - the catalytic core - and F(0) - the membrane proton channel. F(1) has five subunits: alpha(3), beta(3), gamma(1), delta(1), epsilon(1). F(0) has four main subunits: a(1), b(1), b'(1) and c(10-14). The alpha and beta chains form an alternating ring which encloses part of the gamma chain. F(1) is attached to F(0) by a central stalk formed by the gamma and epsilon chains, while a peripheral stalk is formed by the delta, b and b' chains.

Its subcellular location is the cellular thylakoid membrane. Functionally, f(1)F(0) ATP synthase produces ATP from ADP in the presence of a proton or sodium gradient. F-type ATPases consist of two structural domains, F(1) containing the extramembraneous catalytic core and F(0) containing the membrane proton channel, linked together by a central stalk and a peripheral stalk. During catalysis, ATP synthesis in the catalytic domain of F(1) is coupled via a rotary mechanism of the central stalk subunits to proton translocation. Its function is as follows. Component of the F(0) channel, it forms part of the peripheral stalk, linking F(1) to F(0). The b'-subunit is a diverged and duplicated form of b found in plants and photosynthetic bacteria. This chain is ATP synthase subunit b', found in Prochlorococcus marinus (strain MIT 9211).